A 427-amino-acid chain; its full sequence is Histidine--tRNA ligase (427 aa).

The protein belongs to the class-II aminoacyl-tRNA synthetase family. As to quaternary structure, homodimer.

It localises to the cytoplasm. The catalysed reaction is tRNA(His) + L-histidine + ATP = L-histidyl-tRNA(His) + AMP + diphosphate + H(+). The polypeptide is Histidine--tRNA ligase (Mannheimia succiniciproducens (strain KCTC 0769BP / MBEL55E)).